The following is a 434-amino-acid chain: CCA tRNA nucleotidyltransferase 1, mitochondrial (434 aa).

The N-terminal 41 residues, 1-41, are a transit peptide targeting the mitochondrion; the sequence is MLRCLYHWHRPVLNRRWSRLCLPKQYLFTMKLQSPEFQSLF. The ATP site is built by Gly-64 and Arg-67. CTP is bound by residues Gly-64 and Arg-67. The Mg(2+) site is built by Asp-77 and Asp-79. Arg-151, Asp-194, Arg-197, Arg-200, and Arg-203 together coordinate ATP. Positions 151, 194, 197, 200, and 203 each coordinate CTP. Ser-400 bears the Phosphoserine mark. Residue Lys-402 is modified to N6-acetyllysine.

This sequence belongs to the tRNA nucleotidyltransferase/poly(A) polymerase family. In terms of assembly, monomer, and homodimer; disulfide-linked. It depends on Mg(2+) as a cofactor.

It is found in the mitochondrion. Its subcellular location is the cytoplasm. The protein resides in the nucleus. It carries out the reaction a tRNA precursor + 2 CTP + ATP = a tRNA with a 3' CCA end + 3 diphosphate. The enzyme catalyses a tRNA with a 3' CCA end + 2 CTP + ATP = a tRNA with a 3' CCACCA end + 3 diphosphate. Its function is as follows. Nucleotidyltransferase that catalyzes the addition and repair of the essential 3'-terminal CCA sequence in tRNAs, which is necessary for the attachment of amino acids to the 3' terminus of tRNA molecules, using CTP and ATP as substrates. tRNA 3'-terminal CCA addition is required both for tRNA processing and repair. Promotes tRNA repair and recycling downstream of the ribosome-associated quality control (RQC) pathway by mediating addition of the tRNA 3'-terminal CCA following cleavage by ANKZF1 and repair by ELAC1. Also involved in tRNA surveillance by mediating tandem CCA addition to generate a CCACCA at the 3' terminus of unstable tRNAs and tRNA-like transcripts. While stable tRNAs receive only 3'-terminal CCA, unstable tRNAs beginning with GG are marked with CCACCA and rapidly degraded. The structural flexibility of RNA controls the choice between CCA versus CCACCA addition: following the first CCA addition cycle, nucleotide-binding to the active site triggers a clockwise screw motion, producing torque on the RNA. This ejects stable RNAs, whereas unstable RNAs are refolded while bound to the enzyme and subjected to a second CCA catalytic cycle. In terms of biological role, adds 2 C residues (CC-) to the 3' terminus of tRNA molecules instead of a complete CCA end as isoform 1 does (in vitro). The polypeptide is CCA tRNA nucleotidyltransferase 1, mitochondrial (Homo sapiens (Human)).